A 162-amino-acid polypeptide reads, in one-letter code: Caveolin-2 (162 aa).

The Cytoplasmic portion of the chain corresponds to 1-86 (MGLETEKADV…FEISKYVMYK (86 aa)). Tyr19 carries the post-translational modification Phosphotyrosine; by SRC. 2 positions are modified to phosphoserine: Ser20 and Ser23. Tyr27 carries the post-translational modification Phosphotyrosine. Ser36 bears the Phosphoserine mark. The segment at residues 87 to 107 (FLTVFLAIPLAFIAGILFATL) is an intramembrane region (helical). Topologically, residues 108 to 162 (SCLHIWILMPFVKTCLMVLPSVQTIWKSVTDVVIGPLCTSVGRSFSSVSMQLSHD) are cytoplasmic.

The protein belongs to the caveolin family. In terms of assembly, monomer or homodimer. Interacts with CAV1; the interaction forms a stable heterooligomeric complex that is required for targeting to lipid rafts and for caveolae formation. Tyrosine phosphorylated forms do not form heterooligomers with the Tyr-19-phosphorylated form existing as a monomer or dimer, and the Tyr-27-form as a monomer only. Interacts (tyrosine phosphorylated form) with the SH2 domain-containing proteins, RASA1, NCK1 and SRC. Interacts (tyrosine phosphorylated form) with INSR, the interaction (Tyr-27-phosphorylated form) is increased on insulin stimulation. Interacts (Tyr-19 phosphorylated form) with MAPK1 (phosphorylated form); the interaction, promoted by insulin, leads to nuclear location and MAPK1 activation. Interacts with STAT3; the interaction is increased on insulin-induced tyrosine phosphorylation leading to STAT activation. In terms of processing, phosphorylated on serine and tyrosine residues. CAV1 promotes phosphorylation on Ser-23 which then targets the complex to the plasma membrane, lipid rafts and caveolae. Phosphorylation on Ser-36 appears to modulate mitosis in endothelial cells. Phosphorylation on both Tyr-19 and Tyr-27 is required for insulin-induced 'Ser-727' phosphorylation of STAT3 and its activation. Phosphorylation on Tyr-19 is required for insulin-induced phosphorylation of MAPK1 and DNA binding of STAT3. Tyrosine phosphorylation is induced by both EGF and insulin.

Its subcellular location is the nucleus. The protein localises to the cytoplasm. It localises to the golgi apparatus membrane. It is found in the cell membrane. The protein resides in the membrane. Its subcellular location is the caveola. Its function is as follows. May act as a scaffolding protein within caveolar membranes. Interacts directly with G-protein alpha subunits and can functionally regulate their activity. Acts as an accessory protein in conjunction with CAV1 in targeting to lipid rafts and driving caveolae formation. The Ser-36 phosphorylated form has a role in modulating mitosis in endothelial cells. Positive regulator of cellular mitogenesis of the MAPK signaling pathway. Required for the insulin-stimulated nuclear translocation and activation of MAPK1 and STAT3, and the subsequent regulation of cell cycle progression. The polypeptide is Caveolin-2 (Cav2) (Mus musculus (Mouse)).